The primary structure comprises 398 residues: MEFCGCLSELMNGESSSKRNGPSTLPVKEVRTDMRSKYSSDLSSYTSACKKDSNLKSFDSSLHQRTNIIITSLAARAETQSLNLDSLMEVYGFLLELNQNAVRVIIESREDVWKNKDLKSLVDVYFKSTSKTLDFCNTVENCVKRTEISQLIIRFAVKQFEAESVDTDLGGDKKKKKYTKTLEELNKFKAMGDPFDGELVTQFDSVYDQQVLFLEELRKQRRKLDKKQRNVKTLRTVSNVFFATAYVSVLVLSVVATTMSAPPVVCAVASGSTAPIEITGKWFSQMWKKYEKAVKRQRGLVLTMESRVQVNNEAMKNIRSDVDELRSWVSSILETVDFAVEREEEEEAMGLAMQGIKKHVDGFTEKMEEVGENAAKCSKFIALGRLLVLEHILGLPAN.

2 consecutive transmembrane segments (helical) span residues 240–260 and 263–283; these read VFFATAYVSVLVLSVVATTMS and PVVCAVASGSTAPIEITGKWF.

This sequence belongs to the UPF0496 family.

It is found in the membrane. In Arabidopsis thaliana (Mouse-ear cress), this protein is UPF0496 protein At5g66660.